Here is a 309-residue protein sequence, read N- to C-terminus: Type II methyltransferase M.HindIII (309 aa).

This sequence belongs to the N(4)/N(6)-methyltransferase family.

The enzyme catalyses a 2'-deoxyadenosine in DNA + S-adenosyl-L-methionine = an N(6)-methyl-2'-deoxyadenosine in DNA + S-adenosyl-L-homocysteine + H(+). Functionally, a beta subtype methylase that recognizes the double-stranded sequence 5'-AAGCTT-3', methylates A-1 on both strands, and protects the DNA from cleavage by the HindIII endonuclease. The protein is Type II methyltransferase M.HindIII of Haemophilus influenzae (strain ATCC 51907 / DSM 11121 / KW20 / Rd).